The following is a 209-amino-acid chain: Small ribosomal subunit protein uS4 (209 aa).

Residues 99–161 (CRLDNIAFRL…SSKLVVVEMG (63 aa)) form the S4 RNA-binding domain.

It belongs to the universal ribosomal protein uS4 family. In terms of assembly, part of the 30S ribosomal subunit. Contacts protein S5. The interaction surface between S4 and S5 is involved in control of translational fidelity.

Its function is as follows. One of the primary rRNA binding proteins, it binds directly to 16S rRNA where it nucleates assembly of the body of the 30S subunit. In terms of biological role, with S5 and S12 plays an important role in translational accuracy. The polypeptide is Small ribosomal subunit protein uS4 (Acidobacterium capsulatum (strain ATCC 51196 / DSM 11244 / BCRC 80197 / JCM 7670 / NBRC 15755 / NCIMB 13165 / 161)).